The sequence spans 65 residues: Small, acid-soluble spore protein Tlp (65 aa).

The protein belongs to the Tlp family.

The protein localises to the spore core. This Bacillus cereus (strain B4264) protein is Small, acid-soluble spore protein Tlp.